A 1964-amino-acid chain; its full sequence is Probable helicase with zinc finger domain (1964 aa).

A C3H1-type zinc finger spans residues 178 to 206; it reads SEEYTLCKRFLEQGICRYGAQCTSAHSQE. Position 248 is a phosphoserine (S248). 668 to 675 contributes to the ATP binding site; the sequence is GPYGTGKT. A DEAA box motif is present at residues 794 to 797; the sequence is DEAA. The span at 1116–1127 shows a compositional bias: polar residues; it reads HSGNSSRQQQSP. Positions 1116–1135 are disordered; it reads HSGNSSRQQQSPPKVKSLYH. T1163 is modified (phosphothreonine). R1245 carries the post-translational modification Omega-N-methylarginine. Disordered regions lie at residues 1248 to 1350, 1360 to 1379, 1388 to 1449, 1463 to 1491, 1631 to 1655, and 1743 to 1964; these read PIPY…LPAP, HFHPLPQLPRPPFPASQPHT, LPEQ…QAGP, QSPAAEAVGPEQPPPPGLPDGHSPLRAIT, QVQPRSPPAVPSPPSSTDHSSQFAN, and QHAA…SYFK. Composition is skewed to basic and acidic residues over residues 1268–1281 and 1292–1308; these read HAEKDQQEQNRNGK and NKIRTPEKKPTEPKQVD. Residues 1365-1374 are compositionally biased toward pro residues; the sequence is PQLPRPPFPA. Residues 1388–1431 are compositionally biased toward low complexity; it reads LPEQPNQMAPQPNQVAPQPNQMTPQPNQVAPQPNQVVQQQSQAP. Over residues 1635 to 1644 the composition is skewed to pro residues; that stretch reads RSPPAVPSPP. Residues S1636, S1760, S1763, and S1788 each carry the phosphoserine modification. Polar residues predominate over residues 1755–1765; that stretch reads SSRTVSASSLP. Polar residues-rich tracts occupy residues 1799–1813 and 1826–1849; these read PQDSLAQGKESQGHS and WANTTSSAPYQNIPCNGSSRTSQP. The span at 1860–1870 shows a compositional bias: basic and acidic residues; sequence KPPEDQLKPES. Composition is skewed to polar residues over residues 1872 to 1881 and 1897 to 1910; these read EVSSSFNYSM and IAESANCSSQQSPA. Residues 1941–1956 are compositionally biased toward low complexity; sequence PLSLLQELSLGSSPGS.

This sequence belongs to the DNA2/NAM7 helicase family. As to quaternary structure, interacts with POLR2A. Interacts with SMYD3; the interaction may bridge SMYD3 and RNA polymerase II. Interacts with SMYD2.

It is found in the nucleus. Its function is as follows. May act as a helicase that plays a role in RNA metabolism in multiple tissues and organs within the developing embryo. This Mus musculus (Mouse) protein is Probable helicase with zinc finger domain (Helz).